Consider the following 121-residue polypeptide: Large ribosomal subunit protein uL18 (121 aa).

The protein belongs to the universal ribosomal protein uL18 family. As to quaternary structure, part of the 50S ribosomal subunit; part of the 5S rRNA/L5/L18/L25 subcomplex. Contacts the 5S and 23S rRNAs.

This is one of the proteins that bind and probably mediate the attachment of the 5S RNA into the large ribosomal subunit, where it forms part of the central protuberance. The protein is Large ribosomal subunit protein uL18 of Burkholderia mallei (strain NCTC 10247).